Here is a 1384-residue protein sequence, read N- to C-terminus: ATP-dependent RNA helicase TDRD9 (1384 aa).

Residues 35–60 form a disordered region; the sequence is EAPREEVQRSEEVPSEAPTAQAQDPV. Over residues 36-46 the composition is skewed to basic and acidic residues; that stretch reads APREEVQRSEE. The 167-residue stretch at 144–310 folds into the Helicase ATP-binding domain; the sequence is ISLIESNSVV…FAVPVQNKMN (167 aa). Residue 157 to 164 participates in ATP binding; the sequence is GATGSGKS. The DEAH box signature appears at 256 to 259; it reads DEVH. One can recognise a Helicase C-terminal domain in the interval 379-546; it reads SGAQFVSERS…VLKVKLLDMG (168 aa). A Tudor domain is found at 946 to 1006; sequence HPHPDLVCLA…REIPCQLLEL (61 aa).

It belongs to the DEAD box helicase family. DEAH subfamily. Interacts with piRNA-associated proteins PIWIL1 and PIWIL4.

It is found in the cytoplasm. It localises to the nucleus. It carries out the reaction ATP + H2O = ADP + phosphate + H(+). Functionally, ATP-binding RNA helicase which plays a central role during spermatogenesis by repressing transposable elements and preventing their mobilization, which is essential for the germline integrity. Acts via the piRNA metabolic process, which mediates the repression of transposable elements during meiosis by forming complexes composed of piRNAs and Piwi proteins and governs the methylation and subsequent repression of transposons. Acts downstream of piRNA biogenesis: exclusively required for transposon silencing in the nucleus, suggesting that it acts as a nuclear effector in the nucleus together with PIWIL4. This chain is ATP-dependent RNA helicase TDRD9, found in Rattus norvegicus (Rat).